Consider the following 3388-residue polypeptide: Genome polyprotein (3388 aa).

Residues 1-15 (MNDQRKKARNTPFNM) form an interaction with host EXOC1 region. At 1–101 (MNDQRKKARN…LNILNRRRRT (101 aa)) the chain is on the cytoplasmic side. Positions 37–72 (MLQGRGPLKLFMALVAFLRFLTIPPTAGILKRWGTI) are hydrophobic; homodimerization of capsid protein C. Positions 101 to 114 (TAGMIIMLIPTVMA) are cleaved as a propeptide — ER anchor for the capsid protein C, removed in mature form by serine protease NS3. The chain crosses the membrane as a helical span at residues 102-122 (AGMIIMLIPTVMAFHLTTRNG). Topologically, residues 123-238 (EPHMIVSRQE…GAWKHAQRIE (116 aa)) are extracellular. Asparagine 183 carries an N-linked (GlcNAc...) asparagine; by host glycan. A helical transmembrane segment spans residues 239 to 259 (TWILRHPGFTIMAAILAYTIG). Residues 260-265 (TTHFQR) are Cytoplasmic-facing. Residues 266–280 (VLIFILLTAIAPSMT) form a helical membrane-spanning segment. At 281–725 (MRCIGISNRD…LHQVFGAIYG (445 aa)) the chain is on the extracellular side. Cystine bridges form between cysteine 283/cysteine 310, cysteine 340/cysteine 401, cysteine 354/cysteine 385, and cysteine 372/cysteine 396. Residue asparagine 347 is glycosylated (N-linked (GlcNAc...) asparagine; by host). Residues 378–391 (DRGWGNGCGLFGKG) form a fusion peptide region. A glycan (N-linked (GlcNAc...) asparagine; by host) is linked at asparagine 433. Cystine bridges form between cysteine 465–cysteine 565 and cysteine 582–cysteine 613. A helical transmembrane segment spans residues 726–746 (AAFSGVSWTMKILIGVIITWI). Topologically, residues 747 to 752 (GMNSRS) are cytoplasmic. The chain crosses the membrane as a helical span at residues 753 to 773 (TSLSVSLVLVGIVTLYLGVMV). Residues 774–1195 (QADSGCVVSW…MVGATMTDDI (422 aa)) are Extracellular-facing. 6 disulfides stabilise this stretch: cysteine 779–cysteine 790, cysteine 830–cysteine 918, cysteine 954–cysteine 998, cysteine 1055–cysteine 1104, cysteine 1066–cysteine 1088, and cysteine 1087–cysteine 1091. N-linked (GlcNAc...) asparagine; by host glycosylation is found at asparagine 905 and asparagine 982. The N-linked (GlcNAc...) asparagine; by host glycan is linked to asparagine 1134. A helical transmembrane segment spans residues 1196-1220 (GMGVTYLALLAAFKVRPTFAAGLLL). Residues 1221 to 1226 (RKLTSK) are Cytoplasmic-facing. Residues 1227-1245 (ELMMTTIGIVLLSQSSIPE) traverse the membrane as a helical segment. Topologically, residues 1246-1269 (TILELTDALALGMMVLKMVRNMEK) are lumenal. Residues 1270–1290 (YQLAVTIMAILCVPNAVILQN) traverse the membrane as a helical segment. Alanine 1291 is a topological domain (cytoplasmic). A helical transmembrane segment spans residues 1292–1310 (WKVSCTILAVVSVSPLFLT). At 1311–1317 (SSQQKAD) the chain is on the lumenal side. The helical transmembrane segment at 1318–1338 (WIPLALTIKGLNPTAIFLTTL) threads the bilayer. Over 1339–1346 (SRTSKKRS) the chain is Cytoplasmic. Residues 1347–1367 (WPLNEAIMAVGMVSILASSLL) form a helical membrane-spanning segment. At 1368–1370 (KND) the chain is on the lumenal side. A helical membrane pass occupies residues 1371 to 1391 (TPMTGPLVAGGLLTVCYVLTG). Over 1392–1447 (RSADLELERATDVKWDDQAEISGSSPILSITISEDGSMSIKNEEEEQTLTILIRTG) the chain is Cytoplasmic. The tract at residues 1398-1437 (LERATDVKWDDQAEISGSSPILSITISEDGSMSIKNEEEE) is interacts with and activates NS3 protease. The helical intramembrane region spans 1448–1468 (LLVISGLFPVSIPITAAAWYL). The Cytoplasmic segment spans residues 1469–2144 (WEVKKQRAGV…LSELPETLET (676 aa)). In terms of domain architecture, Peptidase S7 spans 1476 to 1653 (AGVLWDVPSP…EKSIEDNPEI (178 aa)). Active-site charge relay system; for serine protease NS3 activity residues include histidine 1526, aspartate 1550, and serine 1610. Residues 1655-1811 (DDIFRKRRLT…QSNAPIMDEE (157 aa)) enclose the Helicase ATP-binding domain. The interval 1659–1662 (RKRR) is important for RNA-binding. Position 1668–1675 (1668–1675 (LHPGAGKT)) interacts with ATP. The short motif at 1759-1762 (DEAH) is the DEAH box element. A Helicase C-terminal domain is found at 1821–1988 (SGHEWVTDFK…IIPSMFEPER (168 aa)). Lysine 1863 carries the N6-acetyllysine; by host modification. Residues 2145–2165 (LLLLTLLATVTGGIFLFLMSG) traverse the membrane as a helical segment. At 2166–2167 (RG) the chain is on the lumenal side. The helical intramembrane region spans 2168-2188 (IGKMTLGMCCIITASILLWYA). Residue glutamine 2189 is a topological domain, lumenal. The helical transmembrane segment at 2190-2210 (IQPHWIAASIILEFFLIVLLI) threads the bilayer. Residues 2211–2225 (PEPEKQRTPQDNQLT) lie on the Cytoplasmic side of the membrane. Residues 2226–2246 (YVIIAILTVVAATMANEMGFL) form a helical membrane-spanning segment. Residues 2247–2271 (EKTKKDLGLGNIATQQPESNILDID) are Lumenal-facing. The helical intramembrane region spans 2272–2292 (LRPASAWTLYAVATTFITPML). Topologically, residues 2293–2313 (RHSIENSSVNVSLTAIANQAT) are lumenal. N-linked (GlcNAc...) asparagine; by host glycosylation is found at asparagine 2298 and asparagine 2302. An intramembrane region (helical) is located at residues 2314–2334 (VLMGLGKGWPLSKMDIGVPLL). Over 2335–2344 (AIGCYSQVNP) the chain is Lumenal. The helical transmembrane segment at 2345–2365 (ITLTAALLLLVAHYAIIGPGL) threads the bilayer. Residues 2366–2410 (QAKATREAQKRAAAGIMKNPTVDGITVIDLDPIPYDPKFEKQLGQ) are Cytoplasmic-facing. The helical transmembrane segment at 2411–2431 (VMLLVLCVTQVLMMRTTWALC) threads the bilayer. The Lumenal portion of the chain corresponds to 2432-2456 (EALTLATGPVSTLWEGNPGRFWNTT). N-linked (GlcNAc...) asparagine; by host glycosylation occurs at asparagine 2454. The helical transmembrane segment at 2457–2477 (IAVSMANIFRGSYLAGAGLLF) threads the bilayer. At 2478–3388 (SIMKNTTSTR…REEEEAGVLW (911 aa)) the chain is on the cytoplasmic side. An mRNA cap 0-1 NS5-type MT domain is found at 2490-2752 (TGNIGETLGE…DVDLGSGTRN (263 aa)). Serine 2544 is a binding site for S-adenosyl-L-methionine. Serine 2544 is modified (phosphoserine). Catalysis depends on lysine 2549, which acts as the For 2'-O-MTase activity. An SUMO-interacting motif motif is present at residues 2565–2568 (VVDL). S-adenosyl-L-methionine is bound by residues glycine 2574, tryptophan 2575, threonine 2592, lysine 2593, aspartate 2619, and valine 2620. Aspartate 2634 functions as the For 2'-O-MTase activity in the catalytic mechanism. Isoleucine 2635 contacts S-adenosyl-L-methionine. Residues lysine 2669 and glutamate 2705 each act as for 2'-O-MTase activity in the active site. Tyrosine 2707 is a binding site for S-adenosyl-L-methionine. Positions 2926, 2930, 2935, and 2938 each coordinate Zn(2+). Residues 3017–3166 (AMYADDTAGW…PLDDRFARAL (150 aa)) form the RdRp catalytic domain. Residues histidine 3200, cysteine 3216, and cysteine 3335 each contribute to the Zn(2+) site.

This sequence in the N-terminal section; belongs to the class I-like SAM-binding methyltransferase superfamily. mRNA cap 0-1 NS5-type methyltransferase family. As to quaternary structure, homodimer. Interacts (via N-terminus) with host EXOC1 (via C-terminus); this interaction results in EXOC1 degradation through the proteasome degradation pathway. Forms heterodimers with envelope protein E in the endoplasmic reticulum and Golgi. In terms of assembly, homodimer; in the endoplasmic reticulum and Golgi. Interacts with protein prM. Interacts with non-structural protein 1. As to quaternary structure, homodimer; Homohexamer when secreted. Interacts with envelope protein E. Interacts with host PRKAA1. Interacts (via N-terminus) with serine protease NS3. In terms of assembly, forms a heterodimer with serine protease NS3. May form homooligomers. As to quaternary structure, forms a heterodimer with NS2B. Interacts with NS4B. Interacts with unphosphorylated RNA-directed RNA polymerase NS5; this interaction stimulates RNA-directed RNA polymerase NS5 guanylyltransferase activity. Interacts with host SHFL. Interacts with host MAVS; this interaction inhibits the synthesis of IFN-beta. Interacts with host SHFL. Interacts with host AUP1; the interaction occurs in the presence of Dengue virus NS4B and induces lipophagy which facilitates production of virus progeny particles. May interact with host SRPRA and SEC61G. In terms of assembly, interacts with serine protease NS3. As to quaternary structure, homodimer. Interacts with host STAT2; this interaction inhibits the phosphorylation of the latter, and, when all viral proteins are present (polyprotein), targets STAT2 for degradation. Interacts with serine protease NS3. Interacts with host PAF1 complex; the interaction may prevent the recruitment of the PAF1 complex to interferon-responsive genes, and thus reduces the immune response. Post-translationally, specific enzymatic cleavages in vivo yield mature proteins. Cleavages in the lumen of endoplasmic reticulum are performed by host signal peptidase, whereas cleavages in the cytoplasmic side are performed by serine protease NS3. Signal cleavage at the 2K-4B site requires a prior NS3 protease-mediated cleavage at the 4A-2K site. Cleaved in post-Golgi vesicles by a host furin, releasing the mature small envelope protein M, and peptide pr. This cleavage is incomplete as up to 30% of viral particles still carry uncleaved prM. In terms of processing, N-glycosylated. Post-translationally, N-glycosylated. The excreted form is glycosylated and this is required for efficient secretion of the protein from infected cells. Acetylated by host KAT5. Acetylation modulates NS3 RNA-binding and unwinding activities and plays an important positive role for viral replication. In terms of processing, sumoylation of RNA-directed RNA polymerase NS5 increases NS5 protein stability allowing proper viral RNA replication. Post-translationally, phosphorylated on serines residues. This phosphorylation may trigger NS5 nuclear localization.

The protein resides in the virion. The protein localises to the host nucleus. Its subcellular location is the host cytoplasm. It is found in the host perinuclear region. It localises to the secreted. The protein resides in the virion membrane. The protein localises to the host endoplasmic reticulum membrane. Its subcellular location is the host mitochondrion. The enzyme catalyses Selective hydrolysis of -Xaa-Xaa-|-Yaa- bonds in which each of the Xaa can be either Arg or Lys and Yaa can be either Ser or Ala.. It carries out the reaction RNA(n) + a ribonucleoside 5'-triphosphate = RNA(n+1) + diphosphate. It catalyses the reaction a ribonucleoside 5'-triphosphate + H2O = a ribonucleoside 5'-diphosphate + phosphate + H(+). The catalysed reaction is ATP + H2O = ADP + phosphate + H(+). The enzyme catalyses a 5'-end (5'-triphosphoguanosine)-ribonucleoside in mRNA + S-adenosyl-L-methionine = a 5'-end (N(7)-methyl 5'-triphosphoguanosine)-ribonucleoside in mRNA + S-adenosyl-L-homocysteine. It carries out the reaction a 5'-end (N(7)-methyl 5'-triphosphoguanosine)-ribonucleoside in mRNA + S-adenosyl-L-methionine = a 5'-end (N(7)-methyl 5'-triphosphoguanosine)-(2'-O-methyl-ribonucleoside) in mRNA + S-adenosyl-L-homocysteine + H(+). Functionally, plays a role in virus budding by binding to the cell membrane and gathering the viral RNA into a nucleocapsid that forms the core of a mature virus particle. During virus entry, may induce genome penetration into the host cytoplasm after hemifusion induced by the surface proteins. Can migrate to the cell nucleus where it modulates host functions. Overcomes the anti-viral effects of host EXOC1 by sequestering and degrading the latter through the proteasome degradation pathway. Its function is as follows. Inhibits RNA silencing by interfering with host Dicer. Prevents premature fusion activity of envelope proteins in trans-Golgi by binding to envelope protein E at pH6.0. After virion release in extracellular space, gets dissociated from E dimers. In terms of biological role, acts as a chaperone for envelope protein E during intracellular virion assembly by masking and inactivating envelope protein E fusion peptide. prM is the only viral peptide matured by host furin in the trans-Golgi network probably to avoid catastrophic activation of the viral fusion activity in acidic Golgi compartment prior to virion release. prM-E cleavage is inefficient, and many virions are only partially matured. These uncleaved prM would play a role in immune evasion. Functionally, may play a role in virus budding. Exerts cytotoxic effects by activating a mitochondrial apoptotic pathway through M ectodomain. May display a viroporin activity. Its function is as follows. Binds to host cell surface receptor and mediates fusion between viral and cellular membranes. Envelope protein is synthesized in the endoplasmic reticulum in the form of heterodimer with protein prM. They play a role in virion budding in the ER, and the newly formed immature particle is covered with 60 spikes composed of heterodimer between precursor prM and envelope protein E. The virion is transported to the Golgi apparatus where the low pH causes dissociation of PrM-E heterodimers and formation of E homodimers. prM-E cleavage is inefficient, and many virions are only partially matured. These uncleaved prM would play a role in immune evasion. Involved in immune evasion, pathogenesis and viral replication. Once cleaved off the polyprotein, is targeted to three destinations: the viral replication cycle, the plasma membrane and the extracellular compartment. Essential for viral replication. Required for formation of the replication complex and recruitment of other non-structural proteins to the ER-derived membrane structures. Excreted as a hexameric lipoparticle that plays a role against host immune response. Antagonizing the complement function. Binds to the host macrophages and dendritic cells. Inhibits signal transduction originating from Toll-like receptor 3 (TLR3). Mediates complement activation, which may contribute to the pathogenesis of the vascular leakage that occurs in severe dengue disease. Activates autophagy through the AMPK/ERK/mTOR signaling pathway. Mechanistically, acts as the assembly platform for STK11-AMPK interactions and promotes STK11-AMPK interactions. In turn, promotes phosphorylation of the AMPK kinase structural domain and activates AMPK, thereby positively regulating the AMPK/ERK/mTOR signaling pathway and inducing autophagy. In terms of biological role, disrupts the host endothelial glycocalyx layer of host pulmonary microvascular endothelial cells, inducing degradation of sialic acid and shedding of heparan sulfate proteoglycans. NS1 induces expression of sialidases, heparanase, and activates cathepsin L, which activates heparanase via enzymatic cleavage. These effects are probably linked to the endothelial hyperpermeability observed in severe dengue disease. Functionally, component of the viral RNA replication complex that functions in virion assembly and antagonizes the host immune response. Its function is as follows. Required cofactor for the serine protease function of NS3. May have membrane-destabilizing activity and form viroporins. Displays three enzymatic activities: serine protease, NTPase and RNA helicase. NS3 serine protease, in association with NS2B, performs its autocleavage and cleaves the polyprotein at dibasic sites in the cytoplasm: C-prM, NS2A-NS2B, NS2B-NS3, NS3-NS4A, NS4A-2K and NS4B-NS5. NS3 RNA helicase binds RNA and unwinds dsRNA in the 3' to 5' direction. In terms of biological role, regulates the ATPase activity of the NS3 helicase activity. NS4A allows NS3 helicase to conserve energy during unwinding. Plays a role in the inhibition of the host innate immune response. Interacts with host MAVS and thereby prevents the interaction between RIGI and MAVS. In turn, IFN-beta production is impaired. Interacts with host AUP1 which mediates induction of lipophagy in host cells and facilitates production of virus progeny particles. Functionally, functions as a signal peptide for NS4B and is required for the interferon antagonism activity of the latter. Its function is as follows. Induces the formation of ER-derived membrane vesicles where the viral replication takes place. Inhibits interferon (IFN)-induced host STAT1 phosphorylation and nuclear translocation, thereby preventing the establishment of cellular antiviral state by blocking the IFN-alpha/beta pathway. Replicates the viral (+) and (-) RNA genome, and performs the capping of genomes in the cytoplasm. NS5 methylates viral RNA cap at guanine N-7 and ribose 2'-O positions. Besides its role in RNA genome replication, also prevents the establishment of cellular antiviral state by blocking the interferon-alpha/beta (IFN-alpha/beta) signaling pathway. Inhibits host TYK2 and STAT2 phosphorylation, thereby preventing activation of JAK-STAT signaling pathway. May reduce immune responses by preventing the recruitment of the host PAF1 complex to interferon-responsive genes. The protein is Genome polyprotein of Aedimorphus (Red guenon).